A 290-amino-acid chain; its full sequence is Cytochrome bo(3) ubiquinol oxidase subunit 2 (290 aa).

The signal sequence occupies residues 1–24 (MISINFNNFFKTLLLILIAFTLHG). The N-palmitoyl cysteine moiety is linked to residue Cys25. Cys25 carries the S-diacylglycerol cysteine lipid modification. At 25–42 (CDSILFNPHGIIAIQECS) the chain is on the extracellular side. The chain crosses the membrane as a helical span at residues 43–63 (ILLISFLIMLFVIIPVIFMTI). The Cytoplasmic segment spans residues 64–87 (YFSVKYRASNINAKYKPDWCDSKK). Residues 88–108 (IEIIVWTIPISIILFLAFVTW) traverse the membrane as a helical segment. At 109–290 (NYSHILDPKK…TYSKNKVFKH (182 aa)) the chain is on the extracellular side.

It belongs to the cytochrome c oxidase subunit 2 family. In terms of assembly, heterooctamer of two A chains, two B chains, two C chains and two D chains.

The protein localises to the cell membrane. In terms of biological role, cytochrome bo(3) ubiquinol terminal oxidase is the component of the aerobic respiratory chain of E.coli that predominates when cells are grown at high aeration. Has proton pump activity across the membrane in addition to electron transfer, pumping 2 protons/electron. The polypeptide is Cytochrome bo(3) ubiquinol oxidase subunit 2 (cyoA) (Buchnera aphidicola subsp. Schizaphis graminum (strain Sg)).